The chain runs to 92 residues: PqqA binding protein (92 aa).

Belongs to the PqqD family. In terms of assembly, monomer. Interacts with PqqE.

It participates in cofactor biosynthesis; pyrroloquinoline quinone biosynthesis. Its function is as follows. Functions as a PqqA binding protein and presents PqqA to PqqE, in the pyrroloquinoline quinone (PQQ) biosynthetic pathway. This is PqqA binding protein from Xanthomonas campestris pv. campestris (strain 8004).